A 618-amino-acid chain; its full sequence is C2H2 finger domain transcription factor sebA (618 aa).

The tract at residues Gly-394–Asp-488 is disordered. The span at Lys-406–Lys-416 shows a compositional bias: basic residues. Composition is skewed to low complexity over residues Lys-417–Thr-432 and Ser-443–Gln-458. A compositionally biased stretch (polar residues) spans Asn-459–Ser-469. 2 C2H2-type zinc fingers span residues Phe-493–His-516 and Phe-522–His-544. The segment covering Asn-582–Thr-597 has biased composition (low complexity). Positions Asn-582–Val-618 are disordered. A compositionally biased stretch (basic residues) spans Pro-608–Val-618.

The protein resides in the nucleus. The protein localises to the cytoplasm. In terms of biological role, transcription factor that is involved in the response to heat shock, oxidative stress, and poor nutrient conditions. Controls expression of oxidative stress response genes such as ccp1, cat1, cat2, sod2; as well as of heat shock genes such as hsf1, hsp30 and hsp90. Negatively controls the expression of the fumiquinazoline (fmq) cluster via binding to the STRE motifs at the fmqA-D promoters. Plays a role in virulence. This Aspergillus fumigatus (strain ATCC MYA-4609 / CBS 101355 / FGSC A1100 / Af293) (Neosartorya fumigata) protein is C2H2 finger domain transcription factor sebA.